A 442-amino-acid chain; its full sequence is D-serine dehydratase (442 aa).

An N6-(pyridoxal phosphate)lysine modification is found at Lys118.

Belongs to the serine/threonine dehydratase family. DsdA subfamily. In terms of assembly, monomer. Pyridoxal 5'-phosphate serves as cofactor.

It catalyses the reaction D-serine = pyruvate + NH4(+). In Escherichia fergusonii (strain ATCC 35469 / DSM 13698 / CCUG 18766 / IAM 14443 / JCM 21226 / LMG 7866 / NBRC 102419 / NCTC 12128 / CDC 0568-73), this protein is D-serine dehydratase.